A 196-amino-acid chain; its full sequence is Leucyl/phenylalanyl-tRNA--protein transferase (196 aa).

Belongs to the L/F-transferase family.

It is found in the cytoplasm. The enzyme catalyses N-terminal L-lysyl-[protein] + L-leucyl-tRNA(Leu) = N-terminal L-leucyl-L-lysyl-[protein] + tRNA(Leu) + H(+). It catalyses the reaction N-terminal L-arginyl-[protein] + L-leucyl-tRNA(Leu) = N-terminal L-leucyl-L-arginyl-[protein] + tRNA(Leu) + H(+). The catalysed reaction is L-phenylalanyl-tRNA(Phe) + an N-terminal L-alpha-aminoacyl-[protein] = an N-terminal L-phenylalanyl-L-alpha-aminoacyl-[protein] + tRNA(Phe). Functions in the N-end rule pathway of protein degradation where it conjugates Leu, Phe and, less efficiently, Met from aminoacyl-tRNAs to the N-termini of proteins containing an N-terminal arginine or lysine. The protein is Leucyl/phenylalanyl-tRNA--protein transferase of Thermosynechococcus vestitus (strain NIES-2133 / IAM M-273 / BP-1).